Consider the following 489-residue polypeptide: Beta-galactosidase (489 aa).

Lys-116 carries the post-translational modification N6-methyllysine; partial. Residue Lys-135 is modified to N6-methyllysine. Glu-206 acts as the Proton donor in catalysis. Residues Lys-273 and Lys-311 each carry the N6-methyllysine; partial modification. An N6-methyllysine modification is found at Lys-332. Residue Glu-387 is the Nucleophile of the active site.

As to quaternary structure, homotetramer.

It carries out the reaction Hydrolysis of terminal non-reducing beta-D-galactose residues in beta-D-galactosides.. This chain is Beta-galactosidase (lacS), found in Saccharolobus solfataricus (strain ATCC 35092 / DSM 1617 / JCM 11322 / P2) (Sulfolobus solfataricus).